Reading from the N-terminus, the 110-residue chain is Cyclin-dependent protein kinase inhibitor SMR8 (110 aa).

As to quaternary structure, interacts with CDKA-1 and D-type cyclins. In terms of tissue distribution, expressed in the root vascular tissue.

In terms of biological role, probable cyclin-dependent protein kinase (CDK) inhibitor that functions as a repressor of mitosis in the endoreduplication cell cycle. The chain is Cyclin-dependent protein kinase inhibitor SMR8 from Arabidopsis thaliana (Mouse-ear cress).